The primary structure comprises 637 residues: Neutral ceramidase (637 aa).

H34 contributes to the Mg(2+) binding site. The Zn(2+) site is built by H96 and H204. The Nucleophile role is filled by S256. Zn(2+) is bound by residues E417 and Y453. Mg(2+)-binding residues include D575, D577, and T580.

The protein belongs to the neutral ceramidase family. Zn(2+) serves as cofactor. Requires Mg(2+) as cofactor.

It carries out the reaction an N-acylsphing-4-enine + H2O = sphing-4-enine + a fatty acid. The catalysed reaction is an N-acylsphinganine + H2O = sphinganine + a fatty acid. The enzyme catalyses an N-acyl-(4R)-4-hydroxysphinganine + H2O = (4R)-hydroxysphinganine + a fatty acid. It catalyses the reaction N-(9Z-octadecenoyl)-sphing-4-enine + H2O = sphing-4-enine + (9Z)-octadecenoate. It carries out the reaction N-(hexanoyl)sphing-4-enine + H2O = hexanoate + sphing-4-enine. The catalysed reaction is N-hexadecanoylsphing-4-enine + H2O = sphing-4-enine + hexadecanoate. The enzyme catalyses N-octadecanoylsphing-4-enine + H2O = sphing-4-enine + octadecanoate. It catalyses the reaction N-eicosanoyl-sphing-4-enine + H2O = eicosanoate + sphing-4-enine. It carries out the reaction N-(15Z-tetracosenoyl)-sphing-4-enine + H2O = (15Z)-tetracosenoate + sphing-4-enine. The catalysed reaction is N-tetracosanoyl-sphing-4-enine + H2O = tetracosanoate + sphing-4-enine. Its activity is regulated as follows. 90% of activity is inhibited by nickel, zinc and calcium ions. Magnesium, cobalt, copper and manganese ions inhibit between 50 and 80% of activity. Functionally, catalyzes the cleavage of the N-acyl linkage of the ceramides (Cers) to yield sphingosine (Sph) and free fatty acid. Also catalyzes the synthesis of Cers from Sph and fatty acid. Cers containning C6-C24 fatty acids are well hydrolyzed, and Cers with mono unsaturated fatty acids are much more hydrolyzed than those with saturated fatty acids. The chain is Neutral ceramidase from Mycobacterium tuberculosis (strain ATCC 25618 / H37Rv).